The sequence spans 96 residues: Large ribosomal subunit protein bL25 (96 aa).

The protein belongs to the bacterial ribosomal protein bL25 family. As to quaternary structure, part of the 50S ribosomal subunit; part of the 5S rRNA/L5/L18/L25 subcomplex. Contacts the 5S rRNA. Binds to the 5S rRNA independently of L5 and L18.

Its function is as follows. This is one of the proteins that binds to the 5S RNA in the ribosome where it forms part of the central protuberance. The chain is Large ribosomal subunit protein bL25 from Buchnera aphidicola subsp. Schizaphis graminum (strain Sg).